Reading from the N-terminus, the 664-residue chain is UvrABC system protein B (664 aa).

One can recognise a Helicase ATP-binding domain in the interval 23–412; that stretch reads EGLNRGMRFQ…VVEQIIRPTG (390 aa). 36–43 lines the ATP pocket; sequence GVTGSGKT. A Beta-hairpin motif is present at residues 89–112; it reads YYDYYQPEAYIPTKDLYIEKNADI. One can recognise a Helicase C-terminal domain in the interval 429-588; it reads DLVNEIVKVK…ITPRSVIKPL (160 aa). The UVR domain maps to 622 to 657; that stretch reads EEYMAVLEEEMYRAASELRYEDAAALRDELFRIREE.

The protein belongs to the UvrB family. As to quaternary structure, forms a heterotetramer with UvrA during the search for lesions. Interacts with UvrC in an incision complex.

The protein localises to the cytoplasm. Its function is as follows. The UvrABC repair system catalyzes the recognition and processing of DNA lesions. A damage recognition complex composed of 2 UvrA and 2 UvrB subunits scans DNA for abnormalities. Upon binding of the UvrA(2)B(2) complex to a putative damaged site, the DNA wraps around one UvrB monomer. DNA wrap is dependent on ATP binding by UvrB and probably causes local melting of the DNA helix, facilitating insertion of UvrB beta-hairpin between the DNA strands. Then UvrB probes one DNA strand for the presence of a lesion. If a lesion is found the UvrA subunits dissociate and the UvrB-DNA preincision complex is formed. This complex is subsequently bound by UvrC and the second UvrB is released. If no lesion is found, the DNA wraps around the other UvrB subunit that will check the other stand for damage. The chain is UvrABC system protein B from Thermotoga maritima (strain ATCC 43589 / DSM 3109 / JCM 10099 / NBRC 100826 / MSB8).